Consider the following 117-residue polypeptide: Holo-[acyl-carrier-protein] synthase (117 aa).

Mg(2+) contacts are provided by Asp-8 and Glu-58.

This sequence belongs to the P-Pant transferase superfamily. AcpS family. Mg(2+) serves as cofactor.

Its subcellular location is the cytoplasm. The catalysed reaction is apo-[ACP] + CoA = holo-[ACP] + adenosine 3',5'-bisphosphate + H(+). In terms of biological role, transfers the 4'-phosphopantetheine moiety from coenzyme A to a Ser of acyl-carrier-protein. The sequence is that of Holo-[acyl-carrier-protein] synthase from Staphylococcus epidermidis (strain ATCC 35984 / DSM 28319 / BCRC 17069 / CCUG 31568 / BM 3577 / RP62A).